A 277-amino-acid chain; its full sequence is Phosphate import ATP-binding protein PstB (277 aa).

Positions 31 to 272 (LEVPGLNLFY…PAKKQTEDYI (242 aa)) constitute an ABC transporter domain. Residue 63-70 (GPSGCGKS) coordinates ATP.

This sequence belongs to the ABC transporter superfamily. Phosphate importer (TC 3.A.1.7) family. In terms of assembly, the complex is composed of two ATP-binding proteins (PstB), two transmembrane proteins (PstC and PstA) (Potential). PstS is missing in this species.

The protein localises to the cell inner membrane. The enzyme catalyses phosphate(out) + ATP + H2O = ADP + 2 phosphate(in) + H(+). Functionally, part of the ABC transporter complex PstSACB involved in phosphate import. Responsible for energy coupling to the transport system. This chain is Phosphate import ATP-binding protein PstB, found in Pseudomonas aeruginosa (strain ATCC 15692 / DSM 22644 / CIP 104116 / JCM 14847 / LMG 12228 / 1C / PRS 101 / PAO1).